The following is a 233-amino-acid chain: Large ribosomal subunit protein eL6x (233 aa).

A compositionally biased stretch (basic and acidic residues) spans His-48–Lys-72. The tract at residues His-48 to Ala-80 is disordered.

This sequence belongs to the eukaryotic ribosomal protein eL6 family.

This chain is Large ribosomal subunit protein eL6x (RPL6C), found in Arabidopsis thaliana (Mouse-ear cress).